The primary structure comprises 284 residues: Signal peptidase I (284 aa).

Residues 4–22 form a helical membrane-spanning segment; that stretch reads NFPLLLVIAVAVCGALALV. Residues 23 to 58 are Cytoplasmic-facing; that stretch reads DLVLFAPRRRAAISSYEGQVNEPDPAVLEKLNKEPL. Residues 59 to 77 form a helical membrane-spanning segment; that stretch reads LVEYGKSFFPVLFIVLVLR. The Periplasmic portion of the chain corresponds to 78–284; the sequence is SFLVEPFQIP…PNFSRVGVIH (207 aa). Catalysis depends on residues Ser-90 and Lys-145.

The protein belongs to the peptidase S26 family.

It is found in the cell inner membrane. It carries out the reaction Cleavage of hydrophobic, N-terminal signal or leader sequences from secreted and periplasmic proteins.. This chain is Signal peptidase I (lepB), found in Pseudomonas aeruginosa (strain ATCC 15692 / DSM 22644 / CIP 104116 / JCM 14847 / LMG 12228 / 1C / PRS 101 / PAO1).